The sequence spans 1157 residues: Nitric oxide synthase, inducible (1157 aa).

Residues 23 to 27 (DINNN) carry the DINNN-motif; mediates interaction with SPSB1, SPSB2 and SPSB4 motif. Residues 29–64 (EKLRQASSSPVTQDDPKCPSRSRHRNECSQPLAETA) form a disordered region. Positions 110 and 115 each coordinate Zn(2+). Cys200 is a heme b binding site. L-arginine-binding residues include Gln263, Trp372, Tyr373, and Glu377. Residues Arg381, Ile462, Trp463, and Phe476 each contribute to the (6R)-L-erythro-5,6,7,8-tetrahydrobiopterin site. Residue Tyr491 coordinates heme b. The interval 515–535 (FKVLVKAVLFAAVLMHKTMAA) is calmodulin-binding. One can recognise a Flavodoxin-like domain in the interval 539 to 677 (ATILFATETG…AFRGWAVQTF (139 aa)). FMN is bound by residues Thr545, Glu546, Thr547, Arg549, Ser550, Ser591, Thr592, Ser628, Cys635, Glu661, and Gln665. Residues 730-970 (KYVFSMRLKS…VRSASGFQLP (241 aa)) form the FAD-binding FR-type domain. Arg750 contributes to the NADP(+) binding site. 6 residues coordinate FAD: His772, Arg906, Tyr908, Ser909, Thr924, and Ala926. Thr929 contributes to the NADP(+) binding site. The FAD site is built by Tyr930, Val943, Cys944, and Ser945. NADP(+) is bound by residues Thr984, Arg1017, Ser1046, Arg1047, Lys1053, Tyr1055, Gln1057, and Asp1090. Positions 1138–1157 (KEGAVGPPSDPRAPGAHGKS) are disordered.

This sequence belongs to the NOS family. In terms of assembly, homodimer. Interacts with NHERF1. Interacts with GAPDH; induced by oxidatively-modified low-densitity lipoprotein (LDL(ox)). Interacts with S100A8 and S100A9 to form the iNOS-S100A8/9 transnitrosylase complex. Interacts with SPSB1, SPSB2 and SPSB4. Interacts with ELOC and CUL5 in the presence of SPSB1 or SPSB2 or SPSB4. Forms a complex with ASL, ASS1 and HSP90AA1; the complex regulates cell-autonomous L-arginine synthesis and citrulline recycling while channeling extracellular L-arginine to nitric oxide synthesis pathway. The cofactor is heme b. FAD is required as a cofactor. Requires FMN as cofactor. (6R)-L-erythro-5,6,7,8-tetrahydrobiopterin serves as cofactor. Polyubiquitinated; mediated by SPSB1, SPSB2 and SPSB4, leading to proteasomal degradation. In terms of tissue distribution, detected in both stimulated and unstimulated immune cells and macrophages with little or no up-regulation following cellular stimulation with lipopolysaccharides (LPS) or concanavalin A (ConA).

Its subcellular location is the cytoplasm. The protein localises to the cytosol. The catalysed reaction is 2 L-arginine + 3 NADPH + 4 O2 + H(+) = 2 L-citrulline + 2 nitric oxide + 3 NADP(+) + 4 H2O. With respect to regulation, not stimulated by calcium/calmodulin. Its function is as follows. Produces nitric oxide (NO) which is a messenger molecule with diverse functions throughout the body. In macrophages, NO mediates tumoricidal and bactericidal actions. Also has nitrosylase activity and mediates cysteine S-nitrosylation of cytoplasmic target proteins such PTGS2/COX2. As component of the iNOS-S100A8/9 transnitrosylase complex involved in the selective inflammatory stimulus-dependent S-nitrosylation of GAPDH implicated in regulation of the GAIT complex activity and probably multiple targets including ANXA5, EZR, MSN and VIM. Involved in inflammation, enhances the synthesis of pro-inflammatory mediators such as IL6 and IL8. In Sus scrofa (Pig), this protein is Nitric oxide synthase, inducible (NOS2).